Consider the following 265-residue polypeptide: Mlc titration factor A (265 aa).

Zn(2+)-binding residues include histidine 111, histidine 148, histidine 152, and glutamate 211.

It belongs to the MtfA family. Monomer in solution. Interacts with Mlc. Zn(2+) serves as cofactor.

The protein localises to the cytoplasm. With respect to regulation, association between Mlc and MtfA may induce structural changes that activate the peptidase activity of MtfA while inactivating the DNA-binding ability of Mlc. The aminopeptidase activity is partially inhibited by metal chelators such as EDTA and phenantroline, but not by inhibitors for serine-, aspartyl-, or cysteine-proteases. In terms of biological role, involved in the modulation of the activity of the glucose-phosphotransferase system (glucose-PTS). Interacts with the transcriptional repressor Mlc, preventing its interaction with DNA and leading to the modulation of expression of genes regulated by Mlc, including ptsG, which encodes the PTS system glucose-specific EIICB component. Its function is as follows. Shows zinc-dependent metallopeptidase activity. In vitro, can cleave several artificial substrates. The highest activity is observed for L-alanine fused to 4-nitroanilide (L-alanine-pNA). Shows lower activity towards proline-pNA and valine-pNA. In Klebsiella pneumoniae subsp. pneumoniae (strain ATCC 700721 / MGH 78578), this protein is Mlc titration factor A.